Consider the following 83-residue polypeptide: Protein CASPARIAN STRIP INTEGRITY FACTOR 1 (83 aa).

The signal sequence occupies residues 1–22 (MGMSPLTVKKLGFIFMIVSASA). The tract at residues 59 to 83 (MNTKDYGNNSPSPRLERPPFKLIPN) is disordered. Y64 bears the Sulfotyrosine mark. A hydroxyproline mark is found at P69 and P71.

Interacts with the specific receptor kinases GSO1 and GSO2. In terms of tissue distribution, expressed exclusively in the root stele.

Functionally, peptide hormone required for contiguous Casparian strip diffusion barrier formation in roots via the regulation of CASPs protein expression and distribution in a GSO1-GSO2 signaling pathway. The Casparian strip is required for ion homeostasis (e.g. iron and potassium ions). This Arabidopsis thaliana (Mouse-ear cress) protein is Protein CASPARIAN STRIP INTEGRITY FACTOR 1.